We begin with the raw amino-acid sequence, 480 residues long: Glycogen synthase (480 aa).

Belongs to the glycosyltransferase 1 family. Bacterial/plant glycogen synthase subfamily.

The enzyme catalyses [(1-&gt;4)-alpha-D-glucosyl](n) + ADP-alpha-D-glucose = [(1-&gt;4)-alpha-D-glucosyl](n+1) + ADP + H(+). The protein operates within glycan biosynthesis; glycogen biosynthesis. Functionally, synthesizes alpha-1,4-glucan chains using ADP-glucose. The polypeptide is Glycogen synthase (Rhizobium etli (strain ATCC 51251 / DSM 11541 / JCM 21823 / NBRC 15573 / CFN 42)).